The chain runs to 306 residues: D-alanine--D-alanine ligase (306 aa).

The ATP-grasp domain occupies Lys-101–Arg-301. Val-129–Thr-185 lines the ATP pocket. Mg(2+)-binding residues include Asp-256, Glu-268, and Asn-270.

This sequence belongs to the D-alanine--D-alanine ligase family. Mg(2+) is required as a cofactor. Mn(2+) serves as cofactor.

It localises to the cytoplasm. The enzyme catalyses 2 D-alanine + ATP = D-alanyl-D-alanine + ADP + phosphate + H(+). Its pathway is cell wall biogenesis; peptidoglycan biosynthesis. Functionally, cell wall formation. This is D-alanine--D-alanine ligase from Desulforudis audaxviator (strain MP104C).